A 354-amino-acid polypeptide reads, in one-letter code: tRNA N6-adenosine threonylcarbamoyltransferase (354 aa).

Fe cation contacts are provided by H116 and H120. Substrate contacts are provided by residues 139 to 143 (LVSGG), D172, G185, and N281. A Fe cation-binding site is contributed by D309.

Belongs to the KAE1 / TsaD family. Fe(2+) serves as cofactor.

It is found in the cytoplasm. It carries out the reaction L-threonylcarbamoyladenylate + adenosine(37) in tRNA = N(6)-L-threonylcarbamoyladenosine(37) in tRNA + AMP + H(+). Its function is as follows. Required for the formation of a threonylcarbamoyl group on adenosine at position 37 (t(6)A37) in tRNAs that read codons beginning with adenine. Is involved in the transfer of the threonylcarbamoyl moiety of threonylcarbamoyl-AMP (TC-AMP) to the N6 group of A37, together with TsaE and TsaB. TsaD likely plays a direct catalytic role in this reaction. The chain is tRNA N6-adenosine threonylcarbamoyltransferase from Parasynechococcus marenigrum (strain WH8102).